The chain runs to 361 residues: DNA replication and repair protein RecF (361 aa).

Residue 30–37 participates in ATP binding; the sequence is GANGSGKT.

This sequence belongs to the RecF family.

It is found in the cytoplasm. Functionally, the RecF protein is involved in DNA metabolism; it is required for DNA replication and normal SOS inducibility. RecF binds preferentially to single-stranded, linear DNA. It also seems to bind ATP. In Glaesserella parasuis serovar 5 (strain SH0165) (Haemophilus parasuis), this protein is DNA replication and repair protein RecF.